We begin with the raw amino-acid sequence, 640 residues long: Threonine--tRNA ligase (640 aa).

The TGS domain occupies 1–61 (MPIITLPDGN…EKDSEVNIIT (61 aa)). A catalytic region spans residues 242–533 (DHRRIAKQMS…LIEHYAGRMP (292 aa)). Zn(2+) is bound by residues cysteine 333, histidine 384, and histidine 510.

Belongs to the class-II aminoacyl-tRNA synthetase family. As to quaternary structure, homodimer. The cofactor is Zn(2+).

The protein resides in the cytoplasm. The catalysed reaction is tRNA(Thr) + L-threonine + ATP = L-threonyl-tRNA(Thr) + AMP + diphosphate + H(+). In terms of biological role, catalyzes the attachment of threonine to tRNA(Thr) in a two-step reaction: L-threonine is first activated by ATP to form Thr-AMP and then transferred to the acceptor end of tRNA(Thr). Also edits incorrectly charged L-seryl-tRNA(Thr). This is Threonine--tRNA ligase from Prochlorococcus marinus (strain MIT 9303).